Consider the following 491-residue polypeptide: Cadherin-3 (491 aa).

Cadherin domains are found at residues 1 to 102 (ENTV…PPVF), 103 to 208 (VPPS…DHGP), and 209 to 314 (VPEP…DPWT). The Extracellular portion of the chain corresponds to 1–316 (ENTVSHEVQR…VTCRDPWTWG (316 aa)). N228 is a glycosylation site (N-linked (GlcNAc...) asparagine). The chain crosses the membrane as a helical span at residues 317-339 (FLLPILGAALALLLLLLVLLFLV). At 340–491 (RKKRKIKEPL…ADMYGGGQDD (152 aa)) the chain is on the cytoplasmic side.

As to quaternary structure, interacts with CDCP1 and CTNNB1.

It localises to the cell membrane. Functionally, cadherins are calcium-dependent cell adhesion proteins. They preferentially interact with themselves in a homophilic manner in connecting cells; cadherins may thus contribute to the sorting of heterogeneous cell types. In Bos taurus (Bovine), this protein is Cadherin-3 (CDH3).